A 243-amino-acid chain; its full sequence is Vesicle-associated membrane protein-associated protein B (243 aa).

Residue alanine 2 is modified to N-acetylalanine. Over 2 to 218 (AKVEQVLSLE…PAPATPGKEE (217 aa)) the chain is Cytoplasmic. Residues 7–124 (VLSLEPQHEL…MDSKLRCVFE (118 aa)) form the MSP domain. Serine 146 is subject to Phosphoserine. Lysine 147 is covalently cross-linked (Glycyl lysine isopeptide (Lys-Gly) (interchain with G-Cter in SUMO1)). Position 150 is a phosphothreonine (threonine 150). Serine 158 and serine 159 each carry phosphoserine. The stretch at 161–196 (LDDTEVKKVMEECKRLQSEVQRLREENKQLKEEDGL) forms a coiled coil. The segment covering 185–197 (EENKQLKEEDGLR) has biased composition (basic and acidic residues). The disordered stretch occupies residues 185-217 (EENKQLKEEDGLRMRKPVLSNSPAPAPATPGKE). Position 206 is a phosphoserine (serine 206). The helical; Anchor for type IV membrane protein transmembrane segment at 219-239 (GLSTRLLALVVLFFIVGVIIG) threads the bilayer.

The protein belongs to the VAMP-associated protein (VAP) (TC 9.B.17) family. As to quaternary structure, homodimer, and heterodimer with VAPA. Interacts with VAMP1 and VAMP2. Interacts (via MSP domain) with ZFYVE27. Interacts with RMDN3. Interacts with KIF5A in a ZFYVE27-dependent manner. Interacts (via MSP domain) with STARD3 (via phospho-FFAT motif). Interacts with STARD3NL (via FFAT motif). Interacts with CERT1. Interacts with PLEKHA3 and SACM1L to form a ternary complex. Interacts with VPS13A (via FFAT motif). Interacts with RB1CC1 (via phosphorylated FFAT motif), MIGA2 (via phosphorylated FFAT motif), RMDN3 (via phosphorylated FFAT motif), OSBPL1A (via FFAT motif), KCNB1 (via phosphorylated FFAT motif) and KCNB2 (via phosphorylated FFAT motif). Interacts (via MSP domain) with WDR44 (via FFAT motif); the interactions connect the endoplasmic reticulum (ER) with the endosomal tubule.

The protein localises to the endoplasmic reticulum membrane. In terms of biological role, endoplasmic reticulum (ER)-anchored protein that mediates the formation of contact sites between the ER and endosomes via interaction with FFAT motif-containing proteins such as STARD3 or WDR44. Interacts with STARD3 in a FFAT motif phosphorylation dependent manner. Via interaction with WDR44 participates in neosynthesized protein export. Participates in the endoplasmic reticulum unfolded protein response (UPR) by inducing ERN1/IRE1 activity. Involved in cellular calcium homeostasis regulation. In Sus scrofa (Pig), this protein is Vesicle-associated membrane protein-associated protein B.